The primary structure comprises 179 residues: Large ribosomal subunit protein uL5 (179 aa).

The protein belongs to the universal ribosomal protein uL5 family. Part of the 50S ribosomal subunit; part of the 5S rRNA/L5/L18/L25 subcomplex. Contacts the 5S rRNA and the P site tRNA. Forms a bridge to the 30S subunit in the 70S ribosome.

Its function is as follows. This is one of the proteins that bind and probably mediate the attachment of the 5S RNA into the large ribosomal subunit, where it forms part of the central protuberance. In the 70S ribosome it contacts protein S13 of the 30S subunit (bridge B1b), connecting the 2 subunits; this bridge is implicated in subunit movement. Contacts the P site tRNA; the 5S rRNA and some of its associated proteins might help stabilize positioning of ribosome-bound tRNAs. The chain is Large ribosomal subunit protein uL5 from Geobacillus thermodenitrificans (strain NG80-2).